The chain runs to 270 residues: Monofunctional glycosyltransferase (270 aa).

Residues 1–10 are compositionally biased toward polar residues; sequence MKRSQRMNNS. Positions 1–36 are disordered; the sequence is MKRSQRMNNSPERHSQYRNEPHYNTYYQPVGKPPKK. The span at 11 to 21 shows a compositional bias: basic and acidic residues; it reads PERHSQYRNEP. The helical transmembrane segment at 42–62 threads the bilayer; sequence IFLRLFIIFVFIYALFIGLMY.

It belongs to the glycosyltransferase 51 family.

The protein localises to the cell membrane. It carries out the reaction [GlcNAc-(1-&gt;4)-Mur2Ac(oyl-L-Ala-gamma-D-Glu-L-Lys-D-Ala-D-Ala)](n)-di-trans,octa-cis-undecaprenyl diphosphate + beta-D-GlcNAc-(1-&gt;4)-Mur2Ac(oyl-L-Ala-gamma-D-Glu-L-Lys-D-Ala-D-Ala)-di-trans,octa-cis-undecaprenyl diphosphate = [GlcNAc-(1-&gt;4)-Mur2Ac(oyl-L-Ala-gamma-D-Glu-L-Lys-D-Ala-D-Ala)](n+1)-di-trans,octa-cis-undecaprenyl diphosphate + di-trans,octa-cis-undecaprenyl diphosphate + H(+). It participates in cell wall biogenesis; peptidoglycan biosynthesis. In terms of biological role, peptidoglycan polymerase that catalyzes glycan chain elongation using lipid-linked disaccharide-pentapeptide as the substrate. In Staphylococcus haemolyticus (strain JCSC1435), this protein is Monofunctional glycosyltransferase.